The following is a 176-amino-acid chain: Adenine phosphoribosyltransferase (176 aa).

Belongs to the purine/pyrimidine phosphoribosyltransferase family. As to quaternary structure, homodimer.

The protein localises to the cytoplasm. It carries out the reaction AMP + diphosphate = 5-phospho-alpha-D-ribose 1-diphosphate + adenine. It participates in purine metabolism; AMP biosynthesis via salvage pathway; AMP from adenine: step 1/1. Its function is as follows. Catalyzes a salvage reaction resulting in the formation of AMP, that is energically less costly than de novo synthesis. The protein is Adenine phosphoribosyltransferase of Methylobacillus flagellatus (strain ATCC 51484 / DSM 6875 / VKM B-1610 / KT).